Reading from the N-terminus, the 1007-residue chain is MTTPISNSPSSIPTVTVSTTTASSGSLGTSTVSSTTTSTSVAQTATTTSSASTSIIQSSGENIQSTTGTPSPITSSVSTSAPSPKASATANKTSSAVSGKITSQETSEESETQATTSDGEVSSNYDDVDTPTNSSDSTVDSDYQDVETQYKTISNNGENTYETIGSHGEKNTHVQESHASGTGNPINNQQEAIRQLRSSTYTTSPRNENIFSPGPEGLPNMSLPSYSPTDKSSLLAFLSNPNTKAKMLEHSGHLVFIDTTRSSFIFVPNGNWDQVCSMKVQNGKTKEDLGLKDLEDMCAKFCTGYNKFSSDWGNRVDPLVSSKAGIESGGHLPSSVIINNKFRTCVAYGPWNPKENGPNYTPSAWRRGHRVDFGKIFDGTAPFNKINWGSSPTPGDDGISFSNETIGSEPFATPPSSPSQTPVINVNVNVGGTNVNIGDTNVSKGSGTPTSSQSVDMSTDTSDLDTSDIDTNNQTNGDINTNDNSNNVDGSLSDVDSRVEDDDGVSDTESTNGNDSGKTTSTEENGDPSGPDILAAVRKHLDTVYPGENGGSTEGPLPANQNLGNVIHDVEQNGSAKETIITPGDTGPTDSSSSVDADADVEDTSDTDSGIGDDDGVSDTESTNGNNSGKTTSTEENGDPSGPDILAAVRKHLDTVYPGENGGSTEGPLPANQNLGNVIHDVEQNGAAQETIITPGDTESTDTSSSVNANADLEDVSDADSGFGDDDGISDTESTNGNDSGKNTPVGDGGTPSGPDILAAVRKHLDTVYPGENGGSTERPLPANQNLGDIIHDVEQNGSAKETVVSPYRGGGGNTSSPIGLASLLPATPSTPLMTTPRTNGKAAASSLMIKGGETQAKLVKNGGNIPGETTLAELLPRLRGHLDKVFTSDGKFTNLNGPQLGAIIDQFRKETGSGGIIAHTDSVPGENGTASPLTGSSGEKVSLYDAAKNVTQALTSVTNKVTLAMQGQKLEGIINNNNTPSSIGQNLFAAARATTQSLSSLIGTVQ.

Residues 1-51 (MTTPISNSPSSIPTVTVSTTTASSGSLGTSTVSSTTTSTSVAQTATTTSSA) form the signal peptide. Positions 1-96 (MTTPISNSPS…SATANKTSSA (96 aa)) are enriched in low complexity. Disordered regions lie at residues 1 to 186 (MTTP…GNPI), 200 to 224 (TYTTSPRNENIFSPGPEGLPNMSLP), 387 to 533 (NWGS…GPDI), 543 to 562 (TVYPGENGGSTEGPLPANQN), 578 to 645 (ETII…GPDI), 655 to 674 (TVYPGENGGSTEGPLPANQN), and 712 to 757 (DLED…GPDI). Positions 118–163 (DGEVSSNYDDVDTPTNSSDSTVDSDYQDVETQYKTISNNGENTYET) are enriched in polar residues. The span at 167–176 (HGEKNTHVQE) shows a compositional bias: basic and acidic residues. Composition is skewed to polar residues over residues 177 to 186 (SHASGTGNPI) and 200 to 210 (TYTTSPRNENI). Residues 423-442 (VINVNVNVGGTNVNIGDTNV) are compositionally biased toward low complexity. A compositionally biased stretch (polar residues) spans 443 to 453 (SKGSGTPTSSQ). Residues 469-491 (IDTNNQTNGDINTNDNSNNVDGS) are compositionally biased toward low complexity. The span at 507–523 (DTESTNGNDSGKTTSTE) shows a compositional bias: polar residues. A compositionally biased stretch (acidic residues) spans 597 to 618 (ADADVEDTSDTDSGIGDDDGVS). Low complexity predominate over residues 619-635 (DTESTNGNNSGKTTSTE). The segment covering 712–730 (DLEDVSDADSGFGDDDGIS) has biased composition (acidic residues). A compositionally biased stretch (polar residues) spans 732 to 743 (TESTNGNDSGKN).

Belongs to the chlamydial CPn_0572/CT_456/TC_0741 family.

This is an uncharacterized protein from Chlamydia muridarum (strain MoPn / Nigg).